A 142-amino-acid chain; its full sequence is Small ribosomal subunit protein uS9 (142 aa).

Belongs to the universal ribosomal protein uS9 family. Component of the small ribosomal subunit. Mature ribosomes consist of a small (40S) and a large (60S) subunit. The 40S subunit contains about 32 different proteins and 1 molecule of RNA (18S). The 60S subunit contains 45 different proteins and 3 molecules of RNA (25S, 5.8S and 5S).

The protein localises to the cytoplasm. In terms of biological role, component of the ribosome, a large ribonucleoprotein complex responsible for the synthesis of proteins in the cell. The small ribosomal subunit (SSU) binds messenger RNAs (mRNAs) and translates the encoded message by selecting cognate aminoacyl-transfer RNA (tRNA) molecules. The large subunit (LSU) contains the ribosomal catalytic site termed the peptidyl transferase center (PTC), which catalyzes the formation of peptide bonds, thereby polymerizing the amino acids delivered by tRNAs into a polypeptide chain. The nascent polypeptides leave the ribosome through a tunnel in the LSU and interact with protein factors that function in enzymatic processing, targeting, and the membrane insertion of nascent chains at the exit of the ribosomal tunnel. The polypeptide is Small ribosomal subunit protein uS9 (RPS16A) (Candida albicans (strain SC5314 / ATCC MYA-2876) (Yeast)).